Consider the following 361-residue polypeptide: Large ribosomal subunit protein uL3 (361 aa).

The span at 1-14 (MGRGGRRNPGRPRR) shows a compositional bias: basic residues. Disordered stretches follow at residues 1–33 (MGRGGRRNPGRPRRGSLAFSPRKRASRPVPRIR) and 337–361 (TSQQGVRPKASEDEIVEQLGGPASA).

It belongs to the universal ribosomal protein uL3 family. Part of the 50S ribosomal subunit. Forms a cluster with proteins L14 and L24e.

In terms of biological role, one of the primary rRNA binding proteins, it binds directly near the 3'-end of the 23S rRNA, where it nucleates assembly of the 50S subunit. This Methanopyrus kandleri (strain AV19 / DSM 6324 / JCM 9639 / NBRC 100938) protein is Large ribosomal subunit protein uL3.